Reading from the N-terminus, the 427-residue chain is Beta-1,3-galactosyl-O-glycosyl-glycoprotein beta-1,6-N-acetylglucosaminyltransferase (427 aa).

Over 1 to 9 (MLRKLWRRK) the chain is Cytoplasmic. Residues 5–9 (LWRRK) form a mediates interaction with GOLPH3 and is necessary and sufficient for localization to the Golgi region. A helical; Signal-anchor for type II membrane protein membrane pass occupies residues 10–32 (LFSFPTKYYFLFLAFSVVTFTVL). The interval 33–121 (RIHQKTEFVN…EPLSKEEAGF (89 aa)) is stem region. The Lumenal segment spans residues 33 to 427 (RIHQKTEFVN…RHKALETLKP (395 aa)). N-linked (GlcNAc...) asparagine glycosylation is found at N58 and N95. Disulfide bonds link C59–C412, C100–C172, C151–C199, and C372–C380. The segment at 122 to 427 (PIAYSIVVHH…RHKALETLKP (306 aa)) is catalytic. Residues 128-130 (VVH), 155-157 (DAK), and Y187 contribute to the UDP-N-acetyl-alpha-D-glucosamine site. Residues E243, K251, R254, E320, K341, and Y358 each contribute to the a glycoprotein site. E320 serves as the catalytic Nucleophile. Residues R377 and K400 each coordinate UDP-N-acetyl-alpha-D-glucosamine.

This sequence belongs to the glycosyltransferase 14 family. Interacts with GOLPH3; may control GCNT1 retention in the Golgi. As to expression, expressed in tracheal submucosal glands and epithelium (at protein level).

The protein resides in the golgi apparatus membrane. It catalyses the reaction a 3-O-[beta-D-galactosyl-(1-&gt;3)-N-acetyl-alpha-D-galactosaminyl]-L-seryl-[protein] + UDP-N-acetyl-alpha-D-glucosamine = 3-O-{beta-D-galactosyl-(1-&gt;3)-[N-acetyl-beta-D-glucosaminyl-(1-&gt;6)]-N-acetyl-alpha-D-galactosaminyl}-L-seryl-[protein] + UDP + H(+). It carries out the reaction a 3-O-[beta-D-galactosyl-(1-&gt;3)-N-acetyl-alpha-D-galactosaminyl]-L-threonyl-[protein] + UDP-N-acetyl-alpha-D-glucosamine = a 3-O-{beta-D-galactosyl-(1-&gt;3)-[N-acetyl-beta-D-glucosaminyl-(1-&gt;6)]-N-acetyl-alpha-D-galactosaminyl}-L-threonyl-[protein] + UDP + H(+). The catalysed reaction is a globoside GalGb4Cer + UDP-N-acetyl-alpha-D-glucosamine = a globoside GlcNAc-(beta1-&gt;6)-GalGb4Cer + UDP + H(+). The enzyme catalyses a ganglioside GA1 + UDP-N-acetyl-alpha-D-glucosamine = a ganglioside beta-D-GlcNAc-(1-&gt;6)-GA1 + UDP + H(+). Its pathway is protein modification; protein glycosylation. It participates in glycolipid biosynthesis. Its function is as follows. Glycosyltransferase that catalyzes the transfer of an N-acetylglucosamine (GlcNAc) moiety in beta1-6 linkage from UDP-GlcNAc onto mucin-type core 1 O-glycan to form the branched mucin-type core 2 O-glycan. The catalysis is metal ion-independent and occurs with inversion of the anomeric configuration of sugar donor. Selectively involved in synthesis of mucin-type core 2 O-glycans that serve as scaffolds for the display of selectin ligand sialyl Lewis X epitope by myeloid cells, with an impact on homeostasis and recruitment to inflammatory sites. Can also act on glycolipid substrates. Transfers GlcNAc moiety to GalGb4Cer globosides in a reaction step to the synthesis of stage-specific embryonic antigen 1 (SSEA-1) determinant. Can use Galbeta1-3GalNAcalpha1- and Galbeta1-3GalNAcbeta1- oligosaccharide derivatives as acceptor substrates. This Bos taurus (Bovine) protein is Beta-1,3-galactosyl-O-glycosyl-glycoprotein beta-1,6-N-acetylglucosaminyltransferase (GCNT1).